A 332-amino-acid polypeptide reads, in one-letter code: Peroxidase C1C (332 aa).

Positions 1 to 9 are cleaved as a signal peptide; it reads MLHASFSNA. Glutamine 10 is subject to Pyrrolidone carboxylic acid. 4 disulfides stabilise this stretch: cysteine 20–cysteine 100, cysteine 53–cysteine 58, cysteine 106–cysteine 310, and cysteine 186–cysteine 218. Asparagine 22 carries an N-linked (GlcNAc...) asparagine glycan. Histidine 51 functions as the Proton acceptor in the catalytic mechanism. Ca(2+) is bound by residues aspartate 52, valine 55, glycine 57, aspartate 59, and serine 61. N-linked (GlcNAc...) asparagine glycosylation is present at asparagine 66. Proline 148 provides a ligand contact to substrate. Histidine 179 contributes to the heme b binding site. Residue threonine 180 participates in Ca(2+) binding. N-linked (GlcNAc...) asparagine glycans are attached at residues asparagine 195, asparagine 207, and asparagine 223. Aspartate 231, threonine 234, and aspartate 239 together coordinate Ca(2+). Residue asparagine 264 is glycosylated (N-linked (GlcNAc...) asparagine).

This sequence belongs to the peroxidase family. Classical plant (class III) peroxidase subfamily. It depends on Ca(2+) as a cofactor. Heme b serves as cofactor.

The protein localises to the secreted. The protein resides in the vacuole. It catalyses the reaction 2 a phenolic donor + H2O2 = 2 a phenolic radical donor + 2 H2O. In terms of biological role, removal of H(2)O(2), oxidation of toxic reductants, biosynthesis and degradation of lignin, suberization, auxin catabolism, response to environmental stresses such as wounding, pathogen attack and oxidative stress. These functions might be dependent on each isozyme/isoform in each plant tissue. This Armoracia rusticana (Horseradish) protein is Peroxidase C1C (PRXC1C).